A 444-amino-acid chain; its full sequence is Tubulin beta 8B (444 aa).

Positions 1-4 match the MREI motif motif; that stretch reads MREI. GTP-binding residues include Q11, E69, S138, G142, T143, and G144. E69 is a binding site for Mg(2+). Residue S172 is modified to Phosphoserine; by CDK1. GTP is bound by residues N204 and N226. The disordered stretch occupies residues 421–444; that stretch reads EYQQYQDATAEEEEDEEYAEEEVA. Over residues 429 to 444 the composition is skewed to acidic residues; sequence TAEEEEDEEYAEEEVA. Residue E436 is modified to 5-glutamyl polyglutamate.

It belongs to the tubulin family. In terms of assembly, dimer of alpha and beta chains. A typical microtubule is a hollow water-filled tube with an outer diameter of 25 nm and an inner diameter of 15 nM. Alpha-beta heterodimers associate head-to-tail to form protofilaments running lengthwise along the microtubule wall with the beta-tubulin subunit facing the microtubule plus end conferring a structural polarity. Microtubules usually have 13 protofilaments but different protofilament numbers can be found in some organisms and specialized cells. It depends on Mg(2+) as a cofactor. Post-translationally, some glutamate residues at the C-terminus are polyglutamylated, resulting in polyglutamate chains on the gamma-carboxyl group. Polyglutamylation plays a key role in microtubule severing by spastin (SPAST). SPAST preferentially recognizes and acts on microtubules decorated with short polyglutamate tails: severing activity by SPAST increases as the number of glutamates per tubulin rises from one to eight, but decreases beyond this glutamylation threshold. Glutamylation is also involved in cilia motility. In terms of processing, some glutamate residues at the C-terminus are monoglycylated but not polyglycylated due to the absence of functional TTLL10 in human. Monoglycylation is mainly limited to tubulin incorporated into cilia and flagella axonemes, which is required for their stability and maintenance. Flagella glycylation controls sperm motility. Both polyglutamylation and monoglycylation can coexist on the same protein on adjacent residues, and lowering glycylation levels increases polyglutamylation, and reciprocally. Phosphorylated on Ser-172 by CDK1 during the cell cycle, from metaphase to telophase, but not in interphase. This phosphorylation inhibits tubulin incorporation into microtubules.

It is found in the cytoplasm. The protein resides in the cytoskeleton. Tubulin is the major constituent of microtubules, a cylinder consisting of laterally associated linear protofilaments composed of alpha- and beta-tubulin heterodimers. Microtubules grow by the addition of GTP-tubulin dimers to the microtubule end, where a stabilizing cap forms. Below the cap, tubulin dimers are in GDP-bound state, owing to GTPase activity of alpha-tubulin. This chain is Tubulin beta 8B, found in Homo sapiens (Human).